We begin with the raw amino-acid sequence, 756 residues long: Cartilage oligomeric matrix protein (756 aa).

A signal peptide spans 1 to 20 (MVLAAARVLLLTLAALGASG). A COMP N-terminal region spans residues 22–85 (GQMPLGGDLG…PARTPKLTVR (64 aa)). Positions 86–125 (PLSQCSPGFCFPGVACTETANGARCGPCPEGFTGNGSHCA) constitute an EGF-like 1 domain. 10 disulfide bridges follow: Cys90/Cys101, Cys95/Cys110, Cys113/Cys124, Cys130/Cys141, Cys135/Cys150, Cys183/Cys196, Cys190/Cys205, Cys228/Cys242, Cys236/Cys252, and Cys254/Cys265. N-linked (GlcNAc...) asparagine glycosylation occurs at Asn120. Positions 126–178 (DVNECTAHPCFPRVRCINTSPGFRCEACPPGFSGPTHEGVGLAFAKANKQVCT) constitute an EGF-like 2; calcium-binding domain. The EGF-like 3; calcium-binding domain occupies 179 to 218 (DINECETGQHNCVPNSVCVNTVGSFQCGPCQPGFVGDQAS). The EGF-like 4 domain occupies 224–266 (PQRFCPDGTPSPCHEKADCVLERDGSRSCVCAVGWAGNGLICG). TSP type-3 repeat units lie at residues 267–299 (RDTDLDGFPDEKLRCSERQCRKDNCVTVPNSGQ), 300–335 (EDVDQDGIGDACDPDADGDGVLNEKDNCPLVRNPDQ), 336–358 (RNTDGDKWGDACDNCRSQKNDDQ), 359–394 (KDTDKDGRGDACDDDIDGDRIRNPVDNCPKVPNSDQ), 395–417 (KDTDGDGVGDACDNCPQKSNADQ), 418–455 (RDVDHDFVGDACDSDQDQDGDGHQDSKDNCPTVPNSAQ), 456–491 (QDSDHDGQGDACDDDDDNDGVPDSRDNCRLVPNPGQ), and 492–527 (EDMDRDGVGDACQGDFDADKVVDKIDVCPENAEVTL). Residues 322-502 (NEKDNCPLVR…DMDRDGVGDA (181 aa)) form a disordered region. Basic and acidic residues-rich tracts occupy residues 333–345 (PDQRNTDGDKWGD), 351–369 (RSQKNDDQKDTDKDGRGDA), and 415–425 (ADQRDVDHDFV). The Cell attachment site signature appears at 366-368 (RGD). Acidic residues predominate over residues 466-475 (ACDDDDDNDG). Positions 526–756 (TLTDFRAFQT…DYEAQRLLQA (231 aa)) are mediates cell survival and induction of the IAP family of survival proteins. In terms of domain architecture, TSP C-terminal spans 531 to 745 (RAFQTVVLDP…LRYRCNDTIP (215 aa)). The N-linked (GlcNAc...) asparagine glycan is linked to Asn741.

It belongs to the thrombospondin family. In terms of assembly, pentamer; disulfide-linked. Exists in a more compact conformation in the presence of calcium and shows a more extended conformation in the absence of calcium. Interacts with ITGB3, ITGA5 and FN1. Binding to FN1 requires the presence of divalent cations (Ca(2+), Mg(2+) or Mn(2+)). The greatest amount of binding is seen in the presence of Mn(2+). Interacts with MATN1, MATN3, MATN4 and ACAN. Binds heparin, heparan sulfate and chondroitin sulfate. EDTA dimishes significantly its binding to ACAN and abolishes its binding to MATN3, MATN4 and chondroitin sulfate. Interacts with collagen I, II and IX, and interaction with these collagens is dependent on the presence of zinc ions. Interacts with ADAMTS12. Interacts with ITGA7. The cofactor is Ca(2+). Post-translationally, proteolytically cleaved by metalloproteases ADAMTS4 and ADAMTS1 with ADAMTS4 showing more potent activity.

It localises to the secreted. The protein resides in the extracellular space. The protein localises to the extracellular matrix. In terms of biological role, plays a role in the structural integrity of cartilage via its interaction with other extracellular matrix proteins such as the collagens and fibronectin. Can mediate the interaction of chondrocytes with the cartilage extracellular matrix through interaction with cell surface integrin receptors. Could play a role in the pathogenesis of osteoarthritis. Potent suppressor of apoptosis in both primary chondrocytes and transformed cells. Suppresses apoptosis by blocking the activation of caspase-3 and by inducing the IAP family of survival proteins (BIRC3, BIRC2, BIRC5 and XIAP). Essential for maintaining a vascular smooth muscle cells (VSMCs) contractile/differentiated phenotype under physiological and pathological stimuli. Maintains this phenotype of VSMCs by interacting with ITGA7. This Bos taurus (Bovine) protein is Cartilage oligomeric matrix protein (COMP).